The sequence spans 273 residues: Dermonecrotic toxin LhSicTox-alphaIA2bi (273 aa).

Mg(2+) is bound by residues E25 and D27. The active-site Nucleophile is H41. 2 disulfides stabilise this stretch: C45–C51 and C47–C190. A Mg(2+)-binding site is contributed by D85.

The protein belongs to the arthropod phospholipase D family. Class II subfamily. The cofactor is Mg(2+). Expressed by the venom gland.

The protein localises to the secreted. It carries out the reaction an N-(acyl)-sphingosylphosphocholine = an N-(acyl)-sphingosyl-1,3-cyclic phosphate + choline. It catalyses the reaction an N-(acyl)-sphingosylphosphoethanolamine = an N-(acyl)-sphingosyl-1,3-cyclic phosphate + ethanolamine. The enzyme catalyses a 1-acyl-sn-glycero-3-phosphocholine = a 1-acyl-sn-glycero-2,3-cyclic phosphate + choline. The catalysed reaction is a 1-acyl-sn-glycero-3-phosphoethanolamine = a 1-acyl-sn-glycero-2,3-cyclic phosphate + ethanolamine. Functionally, dermonecrotic toxins cleave the phosphodiester linkage between the phosphate and headgroup of certain phospholipids (sphingolipid and lysolipid substrates), forming an alcohol (often choline) and a cyclic phosphate. This toxin acts on sphingomyelin (SM). It may also act on ceramide phosphoethanolamine (CPE), lysophosphatidylcholine (LPC) and lysophosphatidylethanolamine (LPE), but not on lysophosphatidylserine (LPS), and lysophosphatidylglycerol (LPG). It acts by transphosphatidylation, releasing exclusively cyclic phosphate products as second products. Induces dermonecrosis, hemolysis, increased vascular permeability, edema, inflammatory response, and platelet aggregation. The chain is Dermonecrotic toxin LhSicTox-alphaIA2bi from Loxosceles hirsuta (Recluse spider).